We begin with the raw amino-acid sequence, 555 residues long: 1,3-beta-glucanosyltransferase GAS2 (555 aa).

Positions 1 to 24 (MNKKQNFYAAIIVAIFLCLQLSHG) are cleaved as a signal peptide. Cys89 and Cys118 are disulfide-bonded. Residues Tyr107, 134–142 (SEPDISINR), Asn175, Glu176, Asp217, and Arg222 each bind (1,3-beta-D-glucosyl)n. Residue Glu176 is the Proton donor of the active site. 6 disulfides stabilise this stretch: Cys231/Cys367, Cys247/Cys278, Cys390/Cys442, Cys392/Cys489, Cys399/Cys466, and Cys419/Cys424. Catalysis depends on Glu275, which acts as the Nucleophile. Residue Tyr307 coordinates (1,3-beta-D-glucosyl)n. N-linked (GlcNAc...) asparagine glycosylation is present at Asn498. The GPI-anchor amidated aspartate moiety is linked to residue Asp531. Positions 532-555 (GTIAFKTSGFVILLISMIAAGILL) are cleaved as a propeptide — removed in mature form.

This sequence belongs to the glycosyl hydrolase 72 family. In terms of processing, N-glycosylated.

The protein localises to the cell membrane. Functionally, splits internally a 1,3-beta-glucan molecule and transfers the newly generated reducing end (the donor) to the non-reducing end of another 1,3-beta-glucan molecule (the acceptor) forming a 1,3-beta linkage, resulting in the elongation of 1,3-beta-glucan chains in the cell wall. Involved in spore wall assembly. The sequence is that of 1,3-beta-glucanosyltransferase GAS2 (GAS2) from Saccharomyces cerevisiae (strain ATCC 204508 / S288c) (Baker's yeast).